The sequence spans 1149 residues: Eukaryotic translation initiation factor 3 subunit A (1149 aa).

One can recognise a PCI domain in the interval 317–498 (IQRMTSHVLI…HSVHFGTDLS (182 aa)). Disordered regions lie at residues 496–515 (DLSESQREDHPDGPTLQSMP) and 811–1149 (EEER…KHHR). The span at 811–885 (EEERRRIEEE…APRGEKEERG (75 aa)) shows a compositional bias: basic and acidic residues. Residues 886–895 (GGGGGGGAWR) show a composition bias toward gly residues. Positions 908–924 (AKPESDWRNAREAREPA) are enriched in basic and acidic residues. Positions 925 to 937 (PESAGASSAAAPA) are enriched in low complexity. Composition is skewed to basic and acidic residues over residues 961–970 (RPPRGDDREP), 1005–1095 (GPMR…DRRG), and 1113–1132 (EPAKPREERRGGEERPKEAR).

The protein belongs to the eIF-3 subunit A family. Component of the eukaryotic translation initiation factor 3 (eIF-3) complex.

It localises to the cytoplasm. Its function is as follows. RNA-binding component of the eukaryotic translation initiation factor 3 (eIF-3) complex, which is involved in protein synthesis of a specialized repertoire of mRNAs and, together with other initiation factors, stimulates binding of mRNA and methionyl-tRNAi to the 40S ribosome. The eIF-3 complex specifically targets and initiates translation of a subset of mRNAs involved in cell proliferation. This chain is Eukaryotic translation initiation factor 3 subunit A, found in Culex quinquefasciatus (Southern house mosquito).